Here is a 718-residue protein sequence, read N- to C-terminus: Polyribonucleotide nucleotidyltransferase (718 aa).

Mg(2+) contacts are provided by D496 and D502. Residues 563-622 (PRLLTIKIDPDMIGLVIGPGGKTIKGITEETGAKIDIEDDGTVTISAVDENKAKRARNIV) form the KH domain. An S1 motif domain is found at 632–700 (GDVYAGRVTR…NKGRINLTRL (69 aa)).

This sequence belongs to the polyribonucleotide nucleotidyltransferase family. Mg(2+) is required as a cofactor.

It is found in the cytoplasm. The catalysed reaction is RNA(n+1) + phosphate = RNA(n) + a ribonucleoside 5'-diphosphate. Involved in mRNA degradation. Catalyzes the phosphorolysis of single-stranded polyribonucleotides processively in the 3'- to 5'-direction. This is Polyribonucleotide nucleotidyltransferase from Trichormus variabilis (strain ATCC 29413 / PCC 7937) (Anabaena variabilis).